Consider the following 238-residue polypeptide: Ribonuclease PH (238 aa).

Phosphate is bound by residues arginine 86 and 124–126 (GTR).

It belongs to the RNase PH family. In terms of assembly, homohexameric ring arranged as a trimer of dimers.

The enzyme catalyses tRNA(n+1) + phosphate = tRNA(n) + a ribonucleoside 5'-diphosphate. Its function is as follows. Phosphorolytic 3'-5' exoribonuclease that plays an important role in tRNA 3'-end maturation. Removes nucleotide residues following the 3'-CCA terminus of tRNAs; can also add nucleotides to the ends of RNA molecules by using nucleoside diphosphates as substrates, but this may not be physiologically important. Probably plays a role in initiation of 16S rRNA degradation (leading to ribosome degradation) during starvation. This Enterobacter sp. (strain 638) protein is Ribonuclease PH.